The chain runs to 126 residues: Integrin alpha-M (126 aa).

Residues N25, N78, and N106 are each glycosylated (N-linked (GlcNAc...) asparagine).

The protein belongs to the integrin alpha chain family. In terms of assembly, heterodimer of an alpha and a beta chain. ITGAM associates with ITGB2. Found in a complex with CD177 and ITGB2/CD18. Interacts with JAM3. Interacts with THBD. Interacts with TMEM268; this interaction inhibits ITGAM degradation via the endosome-lysosome pathway.

It is found in the cell membrane. The protein resides in the membrane raft. Its function is as follows. Integrin ITGAM/ITGB2 is implicated in various adhesive interactions of monocytes, macrophages and granulocytes as well as in mediating the uptake of complement-coated particles. It is identical with CR-3, the receptor for the iC3b fragment of the third complement component. It probably recognizes the R-G-D peptide in C3b. Integrin ITGAM/ITGB2 is also a receptor for fibrinogen, factor X and ICAM1. It recognizes P1 and P2 peptides of fibrinogen gamma chain. Regulates neutrophil migration. In association with beta subunit ITGB2/CD18, required for CD177-PRTN3-mediated activation of TNF primed neutrophils. May regulate phagocytosis-induced apoptosis in extravasated neutrophils. May play a role in mast cell development. Required with TYROBP/DAP12 in microglia to control production of microglial superoxide ions which promote the neuronal apoptosis that occurs during brain development. This is Integrin alpha-M (ITGAM) from Cavia porcellus (Guinea pig).